A 1196-amino-acid polypeptide reads, in one-letter code: DNA-directed RNA polymerase subunit beta (1196 aa).

This sequence belongs to the RNA polymerase beta chain family. The RNAP catalytic core consists of 2 alpha, 1 beta, 1 beta' and 1 omega subunit. When a sigma factor is associated with the core the holoenzyme is formed, which can initiate transcription.

The enzyme catalyses RNA(n) + a ribonucleoside 5'-triphosphate = RNA(n+1) + diphosphate. Its function is as follows. DNA-dependent RNA polymerase catalyzes the transcription of DNA into RNA using the four ribonucleoside triphosphates as substrates. The chain is DNA-directed RNA polymerase subunit beta from Lactococcus lactis subsp. cremoris (strain MG1363).